A 234-amino-acid chain; its full sequence is Large ribosomal subunit protein uL1 (234 aa).

It belongs to the universal ribosomal protein uL1 family. In terms of assembly, part of the 50S ribosomal subunit.

Binds directly to 23S rRNA. The L1 stalk is quite mobile in the ribosome, and is involved in E site tRNA release. Its function is as follows. Protein L1 is also a translational repressor protein, it controls the translation of the L11 operon by binding to its mRNA. The chain is Large ribosomal subunit protein uL1 from Aliivibrio fischeri (strain ATCC 700601 / ES114) (Vibrio fischeri).